We begin with the raw amino-acid sequence, 165 residues long: Protein SprT (165 aa).

The 144-residue stretch at E20–V163 folds into the SprT-like domain. Residue H78 coordinates Zn(2+). E79 is an active-site residue. Residue H82 participates in Zn(2+) binding.

Belongs to the SprT family. The cofactor is Zn(2+).

Its subcellular location is the cytoplasm. This is Protein SprT from Shigella boydii serotype 18 (strain CDC 3083-94 / BS512).